Consider the following 281-residue polypeptide: DegV domain-containing protein SCO2569 (281 aa).

A DegV domain is found at 5–280 (VAIVTDSTAY…PGLLGVVVSS (276 aa)). Hexadecanoate-binding residues include threonine 62 and serine 95.

Functionally, may bind long-chain fatty acids, such as palmitate, and may play a role in lipid transport or fatty acid metabolism. The polypeptide is DegV domain-containing protein SCO2569 (Streptomyces coelicolor (strain ATCC BAA-471 / A3(2) / M145)).